We begin with the raw amino-acid sequence, 495 residues long: UDP-glycosyltransferase 73C5 (495 aa).

The chain crosses the membrane as a helical span at residues 146 to 162; the sequence is ILFHGMGCFCLLCMHVL. UDP-alpha-D-glucose is bound by residues Ser-296, 356–358, 373–381, and 395–398; these read SPQ, HCGWNSTLE, and FADQ. A disordered region spans residues 446-477; it reads MGESDDAKERRRRAKELGDSAHKAVEEGGSSH. The segment covering 450–471 has biased composition (basic and acidic residues); the sequence is DDAKERRRRAKELGDSAHKAVE.

This sequence belongs to the UDP-glycosyltransferase family. As to expression, elongating hypocotyls and root-specific. Expressed in the vascular system, in meristematic tissues of the root tip, and in the vasculature of the hypocotyl right after germination. In late stage of flower development, expressed in petals, and in abscission zones.

The protein resides in the membrane. In terms of biological role, specifically catalyzes 23-O-glucosylation of brassinosteroids, resulting probably in their inactivation. Also, involved in the O-glucosylation of trans-zeatin and dihydrozeatin. Active in vitro on cis-zeatin, dihydrozeatin-9-N-Glc, and olomoucine. Also involved in the detoxification of the Fusarium mycotoxin deoxynivalenol by the transfer of glucose from UDP-glucose to the hydroxyl group at C-3. Possesses low quercetin 7-O-glucosyltransferase and 4'-O-glucosyltransferase activities in vitro. This is UDP-glycosyltransferase 73C5 (UGT73C5) from Arabidopsis thaliana (Mouse-ear cress).